We begin with the raw amino-acid sequence, 323 residues long: MNTIQPDDWAMHDTGAAPTAEVEGAVAAPVPIEGIRGKLTNQAPLAKLVWFKSGGAADWLFEPADLDDLKTFLARLDGDLPVMALGLGSNLIIRDGGVPGVVIKLGKAFASVETHDDYTVTCGAGAHGVLVASTARDAGIAGLEFMRGIPGTIGGFVRMNAGAYGRETRDVLIDCDVVLPGGSFVTLPVADLQYTYRHSALPDGAVVVSARLQGEPGDPEIIGAEMERVAEAREQSQPVRTKTGGSTFKNPPGKKAWELVDAAGCRGLTMGGAQVSEKHTNFLINVDGATSADIEGLGEEVKRRVYAHSGVELEWEIQRVGRP.

The FAD-binding PCMH-type domain maps to 52–217 (KSGGAADWLF…VSARLQGEPG (166 aa)). Arg-197 is an active-site residue. The segment at 234-253 (EQSQPVRTKTGGSTFKNPPG) is disordered. Polar residues predominate over residues 235–249 (QSQPVRTKTGGSTFK). Residue Ser-246 is the Proton donor of the active site. Glu-316 is a catalytic residue.

The protein belongs to the MurB family. FAD serves as cofactor.

The protein localises to the cytoplasm. The enzyme catalyses UDP-N-acetyl-alpha-D-muramate + NADP(+) = UDP-N-acetyl-3-O-(1-carboxyvinyl)-alpha-D-glucosamine + NADPH + H(+). It functions in the pathway cell wall biogenesis; peptidoglycan biosynthesis. Functionally, cell wall formation. The protein is UDP-N-acetylenolpyruvoylglucosamine reductase of Erythrobacter litoralis (strain HTCC2594).